The chain runs to 420 residues: Glucose-1-phosphate adenylyltransferase (420 aa).

Alpha-D-glucose 1-phosphate-binding positions include Y107, G173, 188-189 (EK), and S206.

Belongs to the bacterial/plant glucose-1-phosphate adenylyltransferase family. In terms of assembly, homotetramer.

It catalyses the reaction alpha-D-glucose 1-phosphate + ATP + H(+) = ADP-alpha-D-glucose + diphosphate. It functions in the pathway glycan biosynthesis; glycogen biosynthesis. Involved in the biosynthesis of ADP-glucose, a building block required for the elongation reactions to produce glycogen. Catalyzes the reaction between ATP and alpha-D-glucose 1-phosphate (G1P) to produce pyrophosphate and ADP-Glc. In Shewanella oneidensis (strain ATCC 700550 / JCM 31522 / CIP 106686 / LMG 19005 / NCIMB 14063 / MR-1), this protein is Glucose-1-phosphate adenylyltransferase.